A 349-amino-acid polypeptide reads, in one-letter code: Quinone oxidoreductase-like protein 2 (349 aa).

Residue lysine 35 is modified to N6-acetyllysine. N6-succinyllysine is present on lysine 200.

Belongs to the zinc-containing alcohol dehydrogenase family. Quinone oxidoreductase subfamily.

This is Quinone oxidoreductase-like protein 2 from Bos taurus (Bovine).